A 538-amino-acid chain; its full sequence is Capsular polysaccharide biosynthesis protein RkpI (538 aa).

The next 6 helical transmembrane spans lie at 16–36 (LHDYPIALTLGCYLLSCAVIF), 70–90 (VIALVFAGFFAISWRPLYAAA), 114–134 (LVFSDIALVADVFKYKTIFYA), 139–159 (IVFWIVAFLYVFGVSALYMYF), 170–190 (LFWVLVMVGIAAGPWGLLFYG), and 212–232 (NTVRFGTFASVVFHFIIWLGV).

It localises to the cell membrane. It functions in the pathway capsule biogenesis; capsule polysaccharide biosynthesis. Its function is as follows. Involved in antigen K (capsular polysaccharide) biosynthesis. This chain is Capsular polysaccharide biosynthesis protein RkpI (rkpI), found in Rhizobium meliloti (strain 1021) (Ensifer meliloti).